Consider the following 249-residue polypeptide: Putative nicotinamide mononucleotide adenylyltransferase (249 aa).

2 residues coordinate NAD(+): serine 40 and phenylalanine 41. Histidine 48 contributes to the ATP binding site. NAD(+) contacts are provided by threonine 97, glycine 129, aspartate 131, arginine 165, and asparagine 206. 214 to 217 provides a ligand contact to ATP; sequence TRAR.

Belongs to the eukaryotic NMN adenylyltransferase family. POF1 subfamily.

The protein resides in the cytoplasm. The protein localises to the nucleus. The catalysed reaction is beta-nicotinamide D-ribonucleotide + ATP + H(+) = diphosphate + NAD(+). It functions in the pathway cofactor biosynthesis; NAD(+) biosynthesis; NAD(+) from nicotinamide D-ribonucleotide: step 1/1. Its function is as follows. Catalyzes the formation of NAD(+) from nicotinamide mononucleotide (NMN) and ATP. Involved in the salvage pathway for NAD(+) biosynthesis via NMN. In Schizosaccharomyces pombe (strain 972 / ATCC 24843) (Fission yeast), this protein is Putative nicotinamide mononucleotide adenylyltransferase.